The primary structure comprises 1018 residues: Ubiquitin carboxyl-terminal hydrolase 35 (1018 aa).

A USP domain is found at 441–926 (IGLINLGNTC…TAYVLFYRQR (486 aa)). The Nucleophile role is filled by C450. Disordered stretches follow at residues 544 to 566 (QKLKQSSSPSPPEEPPAPSSTSV) and 610 to 757 (RLGS…GSEG). Residues 552 to 561 (PSPPEEPPAP) show a composition bias toward pro residues. S613 carries the post-translational modification Phosphoserine. 3 stretches are compositionally biased toward basic and acidic residues: residues 673–691 (QEERIEREEEGKEERTEKE), 699–709 (STRGEGEREKE), and 718–728 (KVEKETEKEAE). The active-site Proton acceptor is H862. The disordered stretch occupies residues 984-1011 (HWGRGFDEDKDEDEGSPGGCNPAGGNGG). The span at 999–1011 (SPGGCNPAGGNGG) shows a compositional bias: gly residues.

The protein belongs to the peptidase C19 family. As to quaternary structure, homodimer (via C-terminal region). Interacts with HSP90AA1. In terms of processing, ubiquitinated by CHIP/STUB1 in an HSP90-dependent manner; leading to proteasomal degradation. This ubiquitination can be reversed through auto-deubiquitinating activity. As to expression, expressed in testis, pancreas and skeletal muscle.

It is found in the cytoplasm. The protein localises to the mitochondrion. It carries out the reaction Thiol-dependent hydrolysis of ester, thioester, amide, peptide and isopeptide bonds formed by the C-terminal Gly of ubiquitin (a 76-residue protein attached to proteins as an intracellular targeting signal).. Deubiquitinase that plays a role in different processes including cell cycle regulation, mitophagy or endoplasmic reticulum stress. Inhibits TNFalpha-induced NF-kappa-B activation through stabilizing TNIP2 protein via deubiquitination. Plays an essential role during mitosis by deubiquitinating and thereby regulating the levels of Aurora B/AURKB protein. In addition, regulates the protein levels of other key component of the chromosomal passenger complex (CPC) such as survivin/BIRC5 or Borealin/CDCA8 by enhancing their stability. Regulates the degradation of mitochondria through the process of autophagy termed mitophagy. This chain is Ubiquitin carboxyl-terminal hydrolase 35 (USP35), found in Homo sapiens (Human).